Consider the following 411-residue polypeptide: Proteasome-activating nucleotidase 2 (411 aa).

Positions 35–75 (IVAVNGELQAQLDDVEARREELREEVNRLQRENETLKTASL) form a coiled coil. ATP contacts are provided by residues 196–201 (GTGKTM) and His335. The docks into pockets in the proteasome alpha-ring to cause gate opening stretch occupies residues 408–411 (SYIQ).

Belongs to the AAA ATPase family. In terms of assembly, homohexamer. The hexameric complex has a two-ring architecture resembling a top hat that caps the 20S proteasome core at one or both ends. Upon ATP-binding, the C-terminus of PAN interacts with the alpha-rings of the proteasome core by binding to the intersubunit pockets.

It is found in the cytoplasm. Its function is as follows. ATPase which is responsible for recognizing, binding, unfolding and translocation of substrate proteins into the archaeal 20S proteasome core particle. Is essential for opening the gate of the 20S proteasome via an interaction with its C-terminus, thereby allowing substrate entry and access to the site of proteolysis. Thus, the C-termini of the proteasomal ATPase function like a 'key in a lock' to induce gate opening and therefore regulate proteolysis. Unfolding activity requires energy from ATP hydrolysis, whereas ATP binding alone promotes ATPase-20S proteasome association which triggers gate opening, and supports translocation of unfolded substrates. The protein is Proteasome-activating nucleotidase 2 of Halobacterium salinarum (strain ATCC 700922 / JCM 11081 / NRC-1) (Halobacterium halobium).